The sequence spans 322 residues: Corticotropin-releasing factor-binding protein (322 aa).

An N-terminal signal peptide occupies residues 1 to 24 (MSPNFKLQCHFTLILLTALRGESR). Disulfide bonds link Cys60–Cys81, Cys104–Cys141, Cys183–Cys205, Cys237–Cys264, and Cys277–Cys318. A glycan (N-linked (GlcNAc...) asparagine) is linked at Asn204.

This sequence belongs to the CRF-binding protein family.

It localises to the secreted. Its function is as follows. Binds CRF and inactivates it. May prevent inappropriate pituitary-adrenal stimulation in pregnancy. The protein is Corticotropin-releasing factor-binding protein (Crhbp) of Rattus norvegicus (Rat).